Reading from the N-terminus, the 286-residue chain is 4-hydroxybenzoate octaprenyltransferase (286 aa).

7 helical membrane passes run 21–40, 96–116, 142–162, 167–187, 210–230, 235–255, and 266–286; these read GTLL…AGGM, LFVI…GLVV, FLGV…TGEV, WWLF…YAMV, QIIG…GWSA, LYGL…MLIF, and FLNN…DYLF.

This sequence belongs to the UbiA prenyltransferase family. Mg(2+) serves as cofactor.

It localises to the cell inner membrane. The enzyme catalyses all-trans-octaprenyl diphosphate + 4-hydroxybenzoate = 4-hydroxy-3-(all-trans-octaprenyl)benzoate + diphosphate. Its pathway is cofactor biosynthesis; ubiquinone biosynthesis. In terms of biological role, catalyzes the prenylation of para-hydroxybenzoate (PHB) with an all-trans polyprenyl group. Mediates the second step in the final reaction sequence of ubiquinone-8 (UQ-8) biosynthesis, which is the condensation of the polyisoprenoid side chain with PHB, generating the first membrane-bound Q intermediate 3-octaprenyl-4-hydroxybenzoate. This chain is 4-hydroxybenzoate octaprenyltransferase, found in Shewanella sp. (strain ANA-3).